The sequence spans 965 residues: SKI family transcriptional corepressor 1 (965 aa).

Disordered stretches follow at residues 45 to 72 (TQLG…SSAL), 278 to 367 (RTFS…GGGA), 410 to 458 (DDPV…GGGA), 530 to 592 (SGAP…GSYV), 615 to 777 (AYGA…FAPE), and 796 to 843 (VCTP…EDGL). 3 stretches are compositionally biased toward gly residues: residues 283-312 (QGGG…GPGC), 356-367 (GPAGPGGPGGGA), and 418-442 (EPKG…GGPG). Pro residues predominate over residues 571–586 (LPPPLAPLPPPPPPPA). The segment covering 620–632 (PARGPGPGAGSGG) has biased composition (gly residues). Residues 641–650 (EGSSSYNSAS) are compositionally biased toward polar residues. Composition is skewed to acidic residues over residues 654-663 (DTADEPEVDV) and 670-679 (DDEDAQEETE). A compositionally biased stretch (basic and acidic residues) spans 800–823 (EAHEPDKEDNHSPADDLETRKSYP). Positions 824–835 (DQRSISQPSPAN) are enriched in polar residues. The stretch at 858–922 (ENLAREELQK…DTLCNELDQE (65 aa)) forms a coiled coil.

It belongs to the SKI family. In terms of assembly, interacts with LBX1. Interacts with SMAD1, SMAD2 and SMAD3. Present specifically in cerebellar Purkinje cells (at protein level).

Its subcellular location is the nucleus. Its function is as follows. Acts as a transcriptional corepressor of LBX1. Inhibits BMP signaling. The sequence is that of SKI family transcriptional corepressor 1 (SKOR1) from Homo sapiens (Human).